We begin with the raw amino-acid sequence, 672 residues long: Hydroxyproline O-galactosyltransferase GALT5 (672 aa).

At 1–28 (MKKPKLSKVEKIDKIDLFSSLWKQRSVR) the chain is on the cytoplasmic side. A helical; Signal-anchor for type II membrane protein transmembrane segment spans residues 29–49 (VIMAIGFLYLVIVSVEIPLVF). Residues 50–672 (KSWSSSSVPL…QNKPECCNMR (623 aa)) are Lumenal-facing. Residues 191-392 (KLMELPCGLT…DIDVHSVFVA (202 aa)) enclose the Galectin domain. 2 N-linked (GlcNAc...) asparagine glycosylation sites follow: asparagine 306 and asparagine 620.

This sequence belongs to the glycosyltransferase 31 family. Requires Mn(2+) as cofactor. In terms of tissue distribution, expressed in juvenile leaves, stems, cauline leaves and siliques.

It localises to the golgi apparatus membrane. It functions in the pathway protein modification; protein glycosylation. In terms of biological role, possesses hydroxyproline O-galactosyltransferase activity. Transfers galactose from UDP-galactose to hydroxyproline residues in the arabinogalactan proteins (AGPs). Is specific for AGPs containing non-contiguous peptidyl hydroxyproline residues. Utilizes UDP-galactose solely as sugar donor. The addition of galactose onto the peptidyl hydroxyproline residues in AGP core proteins represents the first committed step in arabinogalactan polysaccharide addition. AGP glycans play essential roles in both vegetative and reproductive plant growth. The protein is Hydroxyproline O-galactosyltransferase GALT5 of Arabidopsis thaliana (Mouse-ear cress).